The sequence spans 47 residues: Large ribosomal subunit protein eL40 (47 aa).

This sequence belongs to the eukaryotic ribosomal protein eL40 family.

The protein is Large ribosomal subunit protein eL40 of Methanocaldococcus jannaschii (strain ATCC 43067 / DSM 2661 / JAL-1 / JCM 10045 / NBRC 100440) (Methanococcus jannaschii).